Consider the following 212-residue polypeptide: Large ribosomal subunit protein uL3 (212 aa).

Positions S140–P155 are enriched in polar residues. The interval S140–G166 is disordered. Q153 is subject to N5-methylglutamine.

Belongs to the universal ribosomal protein uL3 family. Part of the 50S ribosomal subunit. Forms a cluster with proteins L14 and L19. Post-translationally, methylated by PrmB.

In terms of biological role, one of the primary rRNA binding proteins, it binds directly near the 3'-end of the 23S rRNA, where it nucleates assembly of the 50S subunit. In Psychrobacter cryohalolentis (strain ATCC BAA-1226 / DSM 17306 / VKM B-2378 / K5), this protein is Large ribosomal subunit protein uL3.